The chain runs to 124 residues: Small ribosomal subunit protein uS12 (124 aa).

Asp-89 is subject to 3-methylthioaspartic acid. Residues 103–124 (DTAGVKDRRQSRSKYGAKSPKE) are disordered.

The protein belongs to the universal ribosomal protein uS12 family. In terms of assembly, part of the 30S ribosomal subunit. Contacts proteins S8 and S17. May interact with IF1 in the 30S initiation complex.

With S4 and S5 plays an important role in translational accuracy. Its function is as follows. Interacts with and stabilizes bases of the 16S rRNA that are involved in tRNA selection in the A site and with the mRNA backbone. Located at the interface of the 30S and 50S subunits, it traverses the body of the 30S subunit contacting proteins on the other side and probably holding the rRNA structure together. The combined cluster of proteins S8, S12 and S17 appears to hold together the shoulder and platform of the 30S subunit. The protein is Small ribosomal subunit protein uS12 of Prochlorococcus marinus (strain NATL1A).